The sequence spans 29 residues: GLPVCGETCFGGTCNTPGCSCTDPICTRD.

A cross-link (cyclopeptide (Gly-Asp)) is located at residues 1–29 (GLPVCGETCFGGTCNTPGCSCTDPICTRD). 3 cysteine pairs are disulfide-bonded: Cys5–Cys19, Cys9–Cys21, and Cys14–Cys26.

In terms of processing, this is a cyclic peptide.

In terms of biological role, probably participates in a plant defense mechanism. The polypeptide is Kalata-B11 (Oldenlandia affinis).